The primary structure comprises 273 residues: Dermonecrotic toxin LdSicTox-alphaIB1avi (273 aa).

His5 is a catalytic residue. Mg(2+) is bound by residues Glu25 and Asp27. Catalysis depends on His41, which acts as the Nucleophile. Intrachain disulfides connect Cys45-Cys51 and Cys47-Cys190. A Mg(2+)-binding site is contributed by Asp85. An N-linked (GlcNAc...) asparagine glycan is attached at Asn250.

It belongs to the arthropod phospholipase D family. Class II subfamily. It depends on Mg(2+) as a cofactor. As to expression, expressed by the venom gland.

It is found in the secreted. It carries out the reaction an N-(acyl)-sphingosylphosphocholine = an N-(acyl)-sphingosyl-1,3-cyclic phosphate + choline. It catalyses the reaction an N-(acyl)-sphingosylphosphoethanolamine = an N-(acyl)-sphingosyl-1,3-cyclic phosphate + ethanolamine. The catalysed reaction is a 1-acyl-sn-glycero-3-phosphocholine = a 1-acyl-sn-glycero-2,3-cyclic phosphate + choline. The enzyme catalyses a 1-acyl-sn-glycero-3-phosphoethanolamine = a 1-acyl-sn-glycero-2,3-cyclic phosphate + ethanolamine. In terms of biological role, dermonecrotic toxins cleave the phosphodiester linkage between the phosphate and headgroup of certain phospholipids (sphingolipid and lysolipid substrates), forming an alcohol (often choline) and a cyclic phosphate. This toxin acts on sphingomyelin (SM). It may also act on ceramide phosphoethanolamine (CPE), lysophosphatidylcholine (LPC) and lysophosphatidylethanolamine (LPE), but not on lysophosphatidylserine (LPS), and lysophosphatidylglycerol (LPG). It acts by transphosphatidylation, releasing exclusively cyclic phosphate products as second products. Induces dermonecrosis, hemolysis, increased vascular permeability, edema, inflammatory response, and platelet aggregation. This chain is Dermonecrotic toxin LdSicTox-alphaIB1avi, found in Loxosceles deserta (Desert recluse spider).